Consider the following 691-residue polypeptide: DNA ligase (691 aa).

NAD(+)-binding positions include 41–45 (DAEYD), 90–91 (SL), and glutamate 130. The active-site N6-AMP-lysine intermediate is lysine 132. NAD(+)-binding residues include arginine 153, glutamate 190, lysine 307, and lysine 331. Residues cysteine 425, cysteine 428, cysteine 443, and cysteine 449 each contribute to the Zn(2+) site. Residues 610 to 691 (APQGVLAGKT…LHQLLEGNTP (82 aa)) enclose the BRCT domain.

The protein belongs to the NAD-dependent DNA ligase family. LigA subfamily. It depends on Mg(2+) as a cofactor. Requires Mn(2+) as cofactor.

The catalysed reaction is NAD(+) + (deoxyribonucleotide)n-3'-hydroxyl + 5'-phospho-(deoxyribonucleotide)m = (deoxyribonucleotide)n+m + AMP + beta-nicotinamide D-nucleotide.. DNA ligase that catalyzes the formation of phosphodiester linkages between 5'-phosphoryl and 3'-hydroxyl groups in double-stranded DNA using NAD as a coenzyme and as the energy source for the reaction. It is essential for DNA replication and repair of damaged DNA. This chain is DNA ligase, found in Burkholderia ambifaria (strain MC40-6).